Reading from the N-terminus, the 218-residue chain is uncharacterized protein (218 aa).

Basic and acidic residues predominate over residues 184–202 (MDREEKRKEKEEKRKRELA). The interval 184–218 (MDREEKRKEKEEKRKRELAARQLKRQEKKKQKTSK) is disordered. Residues 205–218 (QLKRQEKKKQKTSK) show a composition bias toward basic residues.

This is an uncharacterized protein from Mycoplasma pneumoniae (strain ATCC 29342 / M129 / Subtype 1) (Mycoplasmoides pneumoniae).